Here is a 61-residue protein sequence, read N- to C-terminus: Potassium channel toxin alpha-KTx 6.7 (61 aa).

The first 23 residues, M1–G23, serve as a signal peptide directing secretion. Disulfide bonds link C29/C50, C35/C55, C39/C57, and C45/C60. Position 60 is a cysteine amide (C60).

The protein belongs to the short scorpion toxin superfamily. Potassium channel inhibitor family. Alpha-KTx 06 subfamily. As to expression, expressed by the venom gland.

It is found in the secreted. Blocker of voltage-gated potassium channels. The sequence is that of Potassium channel toxin alpha-KTx 6.7 from Opistophthalmus carinatus (African yellow leg scorpion).